A 177-amino-acid chain; its full sequence is Deoxyuridine 5'-triphosphate nucleotidohydrolase (177 aa).

Substrate contacts are provided by residues 83-85 (RSG), Asn-96, 100-102 (TID), and Lys-110. The span at 150-163 (DLTSSQTDLSNQPN) shows a compositional bias: polar residues. The tract at residues 150 to 177 (DLTSSQTDLSNQPNTGRGTGGFGSTGQK) is disordered. The segment covering 166 to 177 (RGTGGFGSTGQK) has biased composition (gly residues).

It belongs to the dUTPase family. Mg(2+) is required as a cofactor.

The enzyme catalyses dUTP + H2O = dUMP + diphosphate + H(+). It participates in pyrimidine metabolism; dUMP biosynthesis; dUMP from dCTP (dUTP route): step 2/2. Its function is as follows. This enzyme is involved in nucleotide metabolism: it produces dUMP, the immediate precursor of thymidine nucleotides and it decreases the intracellular concentration of dUTP so that uracil cannot be incorporated into DNA. This chain is Deoxyuridine 5'-triphosphate nucleotidohydrolase, found in Bartonella bacilliformis (strain ATCC 35685 / KC583 / Herrer 020/F12,63).